Reading from the N-terminus, the 217-residue chain is Protein OPI10 homolog (217 aa).

The protein belongs to the OPI10 family.

The polypeptide is Protein OPI10 homolog (Dictyostelium discoideum (Social amoeba)).